The sequence spans 338 residues: Phenylalanine--tRNA ligase alpha subunit (338 aa).

A Mg(2+)-binding site is contributed by Glu-252.

This sequence belongs to the class-II aminoacyl-tRNA synthetase family. Phe-tRNA synthetase alpha subunit type 1 subfamily. Tetramer of two alpha and two beta subunits. Mg(2+) is required as a cofactor.

The protein resides in the cytoplasm. It carries out the reaction tRNA(Phe) + L-phenylalanine + ATP = L-phenylalanyl-tRNA(Phe) + AMP + diphosphate + H(+). The polypeptide is Phenylalanine--tRNA ligase alpha subunit (Fusobacterium nucleatum subsp. nucleatum (strain ATCC 25586 / DSM 15643 / BCRC 10681 / CIP 101130 / JCM 8532 / KCTC 2640 / LMG 13131 / VPI 4355)).